The chain runs to 418 residues: Glutamyl-tRNA reductase (418 aa).

Substrate-binding positions include 49 to 52 (TCNR), serine 109, 114 to 116 (EPQ), and glutamine 120. Catalysis depends on cysteine 50, which acts as the Nucleophile. Position 189-194 (189-194 (GAGETI)) interacts with NADP(+).

Belongs to the glutamyl-tRNA reductase family. In terms of assembly, homodimer.

It catalyses the reaction (S)-4-amino-5-oxopentanoate + tRNA(Glu) + NADP(+) = L-glutamyl-tRNA(Glu) + NADPH + H(+). It participates in porphyrin-containing compound metabolism; protoporphyrin-IX biosynthesis; 5-aminolevulinate from L-glutamyl-tRNA(Glu): step 1/2. Catalyzes the NADPH-dependent reduction of glutamyl-tRNA(Glu) to glutamate 1-semialdehyde (GSA). This is Glutamyl-tRNA reductase from Salmonella choleraesuis (strain SC-B67).